The chain runs to 345 residues: Phosphoribosylformylglycinamidine cyclo-ligase (345 aa).

This sequence belongs to the AIR synthase family.

It is found in the cytoplasm. The enzyme catalyses 2-formamido-N(1)-(5-O-phospho-beta-D-ribosyl)acetamidine + ATP = 5-amino-1-(5-phospho-beta-D-ribosyl)imidazole + ADP + phosphate + H(+). It participates in purine metabolism; IMP biosynthesis via de novo pathway; 5-amino-1-(5-phospho-D-ribosyl)imidazole from N(2)-formyl-N(1)-(5-phospho-D-ribosyl)glycinamide: step 2/2. This chain is Phosphoribosylformylglycinamidine cyclo-ligase, found in Chromobacterium violaceum (strain ATCC 12472 / DSM 30191 / JCM 1249 / CCUG 213 / NBRC 12614 / NCIMB 9131 / NCTC 9757 / MK).